The sequence spans 92 residues: Small ribosomal subunit protein bS20 (92 aa).

The tract at residues 1 to 23 is disordered; the sequence is MANTPSAKKRAKQAEKRRSHNAS. A compositionally biased stretch (basic residues) spans 7-20; that stretch reads AKKRAKQAEKRRSH.

The protein belongs to the bacterial ribosomal protein bS20 family.

In terms of biological role, binds directly to 16S ribosomal RNA. This chain is Small ribosomal subunit protein bS20, found in Pseudomonas entomophila (strain L48).